The primary structure comprises 600 residues: Kelch-like protein 24 (600 aa).

The BTB domain maps to 66 to 133; the sequence is TDVIICVEGK…VYTGKVKITT (68 aa). Residues 168–270 enclose the BACK domain; the sequence is CLGIQRFADT…HPNYFVQTVE (103 aa). 6 Kelch repeats span residues 314-363, 365-407, 408-454, 456-502, 504-544, and 546-592; these read VIVV…ALRN, ILVS…VLLG, KVYV…SCIG, LFVI…SLNN, IYVA…VCNG, and IYIL…TIHR.

As to quaternary structure, forms homodimers. Interacts with GRIK2. Component of the BCR(KLHL24) E3 ubiquitin ligase complex, composed of CUL3, RBX1 and KLHL24. Interacts with CUL3. Interacts with KRT14. In terms of processing, autoubiquitinated. Autoubiquitination leads to proteasomal degradation and is necessary to control KLHL24 levels. Expressed in the brain.

It localises to the perikaryon. The protein localises to the cell projection. The protein resides in the axon. It is found in the cytoplasm. Its subcellular location is the cell junction. It localises to the desmosome. The protein localises to the adherens junction. Functionally, controls KRT14 levels during keratinocytes differentiation. As part of the BCR(KLHL24) E3 ubiquitin ligase complex, mediates ubiquitination of KRT14. Specifically reduces kainate receptor-mediated currents in hippocampal neurons, most probably by modulating channel properties. Has a crucial role in cardiac development and function. In Mus musculus (Mouse), this protein is Kelch-like protein 24 (Klhl24).